The sequence spans 977 residues: Probable UDP-N-acetylglucosamine--peptide N-acetylglucosaminyltransferase SEC (977 aa).

TPR repeat units lie at residues 2-35 (ISSK…SVSS), 53-86 (DDAR…NPLR), 87-120 (TDNL…QPQF), 121-154 (AECY…RPNF), 155-188 (ADAW…NPLL), 189-222 (VDAH…QPTF), 223-256 (AIAW…KPAF), 257-290 (PDAY…RPNS), 291-324 (AMAF…DPRF), 325-358 (LEAY…QPNH), 359-392 (PQAM…TTGL), 393-426 (SAPF…DPLA), 427-460 (ADAL…RPTM), and 461-494 (AEAH…RPDF). Residues 495–977 (PEATCNLLHT…ENDLEFPHDR (483 aa)) form a catalytic region region.

Belongs to the glycosyltransferase 41 family. O-GlcNAc transferase subfamily. Interacts with TCP14 and TCP15. Interacts with ATX1.

It catalyses the reaction L-seryl-[protein] + UDP-N-acetyl-alpha-D-glucosamine = 3-O-(N-acetyl-beta-D-glucosaminyl)-L-seryl-[protein] + UDP + H(+). It carries out the reaction L-threonyl-[protein] + UDP-N-acetyl-alpha-D-glucosamine = 3-O-(N-acetyl-beta-D-glucosaminyl)-L-threonyl-[protein] + UDP + H(+). It functions in the pathway protein modification; protein glycosylation. In terms of biological role, O-linked N-acetylglucosamine transferase (OGT) that mediates O-glycosylation of capsid protein (CP) of virus in case of infection by Plum pox virus. OGTs catalyze the addition of nucleotide-activated sugars directly onto the polypeptide through O-glycosidic linkage with the hydroxyl of serine or threonine. Probably acts by adding O-linked sugars to yet unknown proteins. Its OGT activity has been proved in vitro but not in vivo. Required with SPY for gamete and seed development. Mediates O-glycosylation of the DELLA protein RGA, a repressor of the gibberellin (GA) signaling pathway. O-glycosylation by SEC inhibits RGA binding to four of its interactors PIF3, PIF4, JAZ1, and BZR1 that are key regulators in light, jasmonate, and brassinosteroid signaling pathways, respectively. Activates ATX1 through O-GlcNAc modification to augment ATX1-mediated H3K4me3 histone epigenetic modification at FLC locus, thus preventing premature flowering. This chain is Probable UDP-N-acetylglucosamine--peptide N-acetylglucosaminyltransferase SEC, found in Arabidopsis thaliana (Mouse-ear cress).